We begin with the raw amino-acid sequence, 106 residues long: Nucleoid-associated protein bll8115 (106 aa).

It belongs to the YbaB/EbfC family. In terms of assembly, homodimer.

The protein localises to the cytoplasm. The protein resides in the nucleoid. Functionally, binds to DNA and alters its conformation. May be involved in regulation of gene expression, nucleoid organization and DNA protection. The sequence is that of Nucleoid-associated protein bll8115 from Bradyrhizobium diazoefficiens (strain JCM 10833 / BCRC 13528 / IAM 13628 / NBRC 14792 / USDA 110).